Reading from the N-terminus, the 185-residue chain is CASP-like protein 5A1 (185 aa).

Residues 1-45 (MNVSHPAVHPVGVPPALGGHAVPPRMRMRVRMEYLVFQGMPLPGT) are Cytoplasmic-facing. A helical membrane pass occupies residues 46-66 (LGGLVLRLGQFCSALIAFSVM). Over 67-76 (LSVRDFSVTA) the chain is Extracellular. The helical transmembrane segment at 77–97 (FCYLVAATVLQCLWSLAMAVI) threads the bilayer. Topologically, residues 98–121 (DVYALLVKRSLRNPLLVSIFVVGD) are cytoplasmic. The helical transmembrane segment at 122–142 (GVTATLTFAAACASAGVIVLI) threads the bilayer. Over 143 to 160 (GNDIAMCKDNPCANYEAA) the chain is Extracellular. Residues 161–181 (IIMAFLSWFMVSISFILTFWL) form a helical membrane-spanning segment. Over 182–185 (LATL) the chain is Cytoplasmic.

This sequence belongs to the Casparian strip membrane proteins (CASP) family. In terms of assembly, homodimer and heterodimers.

It localises to the cell membrane. The polypeptide is CASP-like protein 5A1 (Picea sitchensis (Sitka spruce)).